Here is a 503-residue protein sequence, read N- to C-terminus: 26S proteasome non-ATPase regulatory subunit 5 (503 aa).

The residue at position 2 (Ala-2) is an N-acetylalanine.

It belongs to the proteasome subunit S5B/HSM3 family. Interacts with PSMC1, PSMC2, PSMD1 and PSMD6. Part of transient complex containing PSMD5, PSMC2, PSMC1 and PSMD2 formed during the assembly of the 26S proteasome.

Functionally, acts as a chaperone during the assembly of the 26S proteasome, specifically of the base subcomplex of the PA700/19S regulatory complex (RC). In the initial step of the base subcomplex assembly is part of an intermediate PSMD5:PSMC2:PSMC1:PSMD2 module which probably assembles with a PSMD10:PSMC4:PSMC5:PAAF1 module followed by dissociation of PSMD5. The sequence is that of 26S proteasome non-ATPase regulatory subunit 5 (PSMD5) from Bos taurus (Bovine).